The primary structure comprises 565 residues: Urocanate hydratase (565 aa).

NAD(+)-binding positions include 61–62 (GG), glutamine 139, 185–187 (GMG), glutamate 205, arginine 210, 251–252 (NA), 272–276 (QTSAH), 282–283 (YL), and tyrosine 331. Cysteine 419 is a catalytic residue. Residues 453–472 (LDSGSVSSPNRETESMKDGS) are disordered. Residues 463–472 (RETESMKDGS) are compositionally biased toward basic and acidic residues. Glycine 501 is a binding site for NAD(+).

The protein belongs to the urocanase family. It depends on NAD(+) as a cofactor.

The protein localises to the cytoplasm. The enzyme catalyses 4-imidazolone-5-propanoate = trans-urocanate + H2O. The protein operates within amino-acid degradation; L-histidine degradation into L-glutamate; N-formimidoyl-L-glutamate from L-histidine: step 2/3. Catalyzes the conversion of urocanate to 4-imidazolone-5-propionate. This Pseudomonas syringae protein is Urocanate hydratase.